The sequence spans 278 residues: Elongation factor Ts (278 aa).

Positions 82–85 are involved in Mg(2+) ion dislocation from EF-Tu; sequence TEPV.

It belongs to the EF-Ts family.

Its subcellular location is the cytoplasm. Its function is as follows. Associates with the EF-Tu.GDP complex and induces the exchange of GDP to GTP. It remains bound to the aminoacyl-tRNA.EF-Tu.GTP complex up to the GTP hydrolysis stage on the ribosome. This is Elongation factor Ts from Cytophaga hutchinsonii (strain ATCC 33406 / DSM 1761 / CIP 103989 / NBRC 15051 / NCIMB 9469 / D465).